Reading from the N-terminus, the 100-residue chain is Co-chaperonin GroES (100 aa).

This sequence belongs to the GroES chaperonin family. In terms of assembly, heptamer of 7 subunits arranged in a ring. Interacts with the chaperonin GroEL.

The protein resides in the cytoplasm. Its function is as follows. Together with the chaperonin GroEL, plays an essential role in assisting protein folding. The GroEL-GroES system forms a nano-cage that allows encapsulation of the non-native substrate proteins and provides a physical environment optimized to promote and accelerate protein folding. GroES binds to the apical surface of the GroEL ring, thereby capping the opening of the GroEL channel. The sequence is that of Co-chaperonin GroES from Mycobacterium tuberculosis (strain CDC 1551 / Oshkosh).